Reading from the N-terminus, the 259-residue chain is Deoxyribose-phosphate aldolase (259 aa).

Asp-102 (proton donor/acceptor) is an active-site residue. Lys-167 functions as the Schiff-base intermediate with acetaldehyde in the catalytic mechanism. Residue Lys-201 is the Proton donor/acceptor of the active site.

It belongs to the DeoC/FbaB aldolase family. DeoC type 2 subfamily.

The protein resides in the cytoplasm. The enzyme catalyses 2-deoxy-D-ribose 5-phosphate = D-glyceraldehyde 3-phosphate + acetaldehyde. It functions in the pathway carbohydrate degradation; 2-deoxy-D-ribose 1-phosphate degradation; D-glyceraldehyde 3-phosphate and acetaldehyde from 2-deoxy-alpha-D-ribose 1-phosphate: step 2/2. Functionally, catalyzes a reversible aldol reaction between acetaldehyde and D-glyceraldehyde 3-phosphate to generate 2-deoxy-D-ribose 5-phosphate. This is Deoxyribose-phosphate aldolase from Escherichia fergusonii (strain ATCC 35469 / DSM 13698 / CCUG 18766 / IAM 14443 / JCM 21226 / LMG 7866 / NBRC 102419 / NCTC 12128 / CDC 0568-73).